The sequence spans 675 residues: UvrABC system protein B (675 aa).

Residues serine 30–arginine 417 form the Helicase ATP-binding domain. Residue glycine 43–threonine 50 participates in ATP binding. The Beta-hairpin signature appears at tyrosine 96–isoleucine 119. The region spanning glutamine 434 to aspartate 601 is the Helicase C-terminal domain. The UVR domain occupies alanine 637–glutamine 672.

The protein belongs to the UvrB family. Forms a heterotetramer with UvrA during the search for lesions. Interacts with UvrC in an incision complex.

It localises to the cytoplasm. In terms of biological role, the UvrABC repair system catalyzes the recognition and processing of DNA lesions. A damage recognition complex composed of 2 UvrA and 2 UvrB subunits scans DNA for abnormalities. Upon binding of the UvrA(2)B(2) complex to a putative damaged site, the DNA wraps around one UvrB monomer. DNA wrap is dependent on ATP binding by UvrB and probably causes local melting of the DNA helix, facilitating insertion of UvrB beta-hairpin between the DNA strands. Then UvrB probes one DNA strand for the presence of a lesion. If a lesion is found the UvrA subunits dissociate and the UvrB-DNA preincision complex is formed. This complex is subsequently bound by UvrC and the second UvrB is released. If no lesion is found, the DNA wraps around the other UvrB subunit that will check the other stand for damage. This chain is UvrABC system protein B, found in Acinetobacter baylyi (strain ATCC 33305 / BD413 / ADP1).